Here is a 144-residue protein sequence, read N- to C-terminus: Peptide methionine sulfoxide reductase MsrB (144 aa).

The segment covering 1 to 12 has biased composition (basic and acidic residues); the sequence is MDKQQGELRQRL. Residues 1–25 form a disordered region; sequence MDKQQGELRQRLTPEQYAVTQEAAT. One can recognise a MsrB domain in the interval 5 to 128; sequence QGELRQRLTP…NSAALKFIPV (124 aa). Cys117 acts as the Nucleophile in catalysis.

It belongs to the MsrB Met sulfoxide reductase family.

The catalysed reaction is L-methionyl-[protein] + [thioredoxin]-disulfide + H2O = L-methionyl-(R)-S-oxide-[protein] + [thioredoxin]-dithiol. The protein is Peptide methionine sulfoxide reductase MsrB of Lactiplantibacillus plantarum (strain ATCC BAA-793 / NCIMB 8826 / WCFS1) (Lactobacillus plantarum).